Reading from the N-terminus, the 129-residue chain is Ergosterol biosynthetic protein 28 (129 aa).

Transmembrane regions (helical) follow at residues 4–24 (LGYW…FGFF), 46–66 (TFGV…FNLE), 71–91 (YLAT…EYLF), and 96–116 (TIAN…WMLL).

Belongs to the ERG28 family.

Its subcellular location is the endoplasmic reticulum membrane. This Arabidopsis thaliana (Mouse-ear cress) protein is Ergosterol biosynthetic protein 28.